A 225-amino-acid polypeptide reads, in one-letter code: UPF0173 metal-dependent hydrolase Fjoh_2786 (225 aa).

The protein belongs to the UPF0173 family.

This chain is UPF0173 metal-dependent hydrolase Fjoh_2786, found in Flavobacterium johnsoniae (strain ATCC 17061 / DSM 2064 / JCM 8514 / BCRC 14874 / CCUG 350202 / NBRC 14942 / NCIMB 11054 / UW101) (Cytophaga johnsonae).